The chain runs to 117 residues: DNA-directed RNA polymerase subunit omega (117 aa).

Basic and acidic residues predominate over residues 96-105 (KEEAEEEAKQ). The tract at residues 96–117 (KEEAEEEAKQKNSRAAKAAAAE) is disordered. Residues 108–117 (SRAAKAAAAE) show a composition bias toward low complexity.

The protein belongs to the RNA polymerase subunit omega family. The RNAP catalytic core consists of 2 alpha, 1 beta, 1 beta' and 1 omega subunit. When a sigma factor is associated with the core the holoenzyme is formed, which can initiate transcription.

The catalysed reaction is RNA(n) + a ribonucleoside 5'-triphosphate = RNA(n+1) + diphosphate. In terms of biological role, promotes RNA polymerase assembly. Latches the N- and C-terminal regions of the beta' subunit thereby facilitating its interaction with the beta and alpha subunits. The sequence is that of DNA-directed RNA polymerase subunit omega from Lactococcus lactis subsp. cremoris (strain MG1363).